We begin with the raw amino-acid sequence, 47 residues long: MARYRCCRSRSRCRRRRRRCYRRRRRCCRRRRRRRVCCRRYSRCRRR.

This sequence belongs to the protamine P1 family. Testis.

The protein localises to the nucleus. It is found in the chromosome. In terms of biological role, protamines substitute for histones in the chromatin of sperm during the haploid phase of spermatogenesis. They compact sperm DNA into a highly condensed, stable and inactive complex. The polypeptide is Sperm protamine P1 (PRM1) (Myotis daubentonii (Daubenton's bat)).